The sequence spans 941 residues: Protein translocase subunit SecA (941 aa).

ATP is bound by residues Gln-87, 105–109 (GEGKT), and Asp-524. Residues 871-919 (DEQPPMPAMEAHKLDPNTGEDQVAQAQSGLAPVAPAKRDPANPATWGKV) are disordered. Zn(2+)-binding residues include Cys-925, Cys-927, Cys-936, and His-937.

Belongs to the SecA family. In terms of assembly, monomer and homodimer. Part of the essential Sec protein translocation apparatus which comprises SecA, SecYEG and auxiliary proteins SecDF-YajC and YidC. The cofactor is Zn(2+).

It localises to the cell inner membrane. The protein resides in the cytoplasm. It catalyses the reaction ATP + H2O + cellular proteinSide 1 = ADP + phosphate + cellular proteinSide 2.. Part of the Sec protein translocase complex. Interacts with the SecYEG preprotein conducting channel. Has a central role in coupling the hydrolysis of ATP to the transfer of proteins into and across the cell membrane, serving both as a receptor for the preprotein-SecB complex and as an ATP-driven molecular motor driving the stepwise translocation of polypeptide chains across the membrane. The polypeptide is Protein translocase subunit SecA (Afipia carboxidovorans (strain ATCC 49405 / DSM 1227 / KCTC 32145 / OM5) (Oligotropha carboxidovorans)).